Here is a 133-residue protein sequence, read N- to C-terminus: Phosphoribosyl-AMP cyclohydrolase (133 aa).

Mg(2+) is bound at residue Asp90. Cys91 serves as a coordination point for Zn(2+). The Mg(2+) site is built by Asp92 and Asp94. 2 residues coordinate Zn(2+): Cys107 and Cys114.

The protein belongs to the PRA-CH family. In terms of assembly, homodimer. Requires Mg(2+) as cofactor. Zn(2+) serves as cofactor.

The protein localises to the cytoplasm. It catalyses the reaction 1-(5-phospho-beta-D-ribosyl)-5'-AMP + H2O = 1-(5-phospho-beta-D-ribosyl)-5-[(5-phospho-beta-D-ribosylamino)methylideneamino]imidazole-4-carboxamide. The protein operates within amino-acid biosynthesis; L-histidine biosynthesis; L-histidine from 5-phospho-alpha-D-ribose 1-diphosphate: step 3/9. In terms of biological role, catalyzes the hydrolysis of the adenine ring of phosphoribosyl-AMP. The protein is Phosphoribosyl-AMP cyclohydrolase of Streptomyces avermitilis (strain ATCC 31267 / DSM 46492 / JCM 5070 / NBRC 14893 / NCIMB 12804 / NRRL 8165 / MA-4680).